Here is a 677-residue protein sequence, read N- to C-terminus: Envelope glycoprotein (677 aa).

A signal peptide spans 1-33 (MGSGYQLLQLPRERFRKTSFLVWVIILFQRAIS). Residues 34-651 (MPLGIVTNST…DLNLWTGWRQ (618 aa)) lie on the Extracellular side of the membrane. A glycan (N-linked (GlcNAc...) asparagine; by host) is linked at N41. Disulfide bonds link C54/C610, C109/C136, C122/C148, C512/C557, and C602/C609. The interval 55–202 (RDKLSSTSQL…HFWKATPAHE (148 aa)) is receptor-binding. N205, N239, N258, N269, N297, N317, N318, N339, N406, N420, N435, and N463 each carry an N-linked (GlcNAc...) asparagine; by host glycan. Residues 306–486 (NLHFQILSTH…PSQPGLTINT (181 aa)) are mucin-like region. Residues 315–326 (HTNNSSDQSPAG) are compositionally biased toward polar residues. Disordered regions lie at residues 315–349 (HTNNSSDQSPAGTVQGKISYHPPTNNSELVPTDSP), 370–483 (NGET…PGLT), and 489–508 (KVADSLSPTRKQKRSVRQNT). 3 stretches are compositionally biased toward polar residues: residues 370–421 (NGET…ASNE), 428–445 (MNSIQGSNNSAQSPQTKA), and 458–472 (PQETANISKPGTSPG). A fusion peptide region spans residues 525–540 (GAAAGLAWIPYFGPAA). A coiled-coil region spans residues 555–596 (LICGLRQLANETTQALQLFLRATTELRTYSLLNRKAIDFLLQ). Residue N564 is glycosylated (N-linked (GlcNAc...) asparagine; by host). The stretch at 616-635 (WTKNITDEINQIKHDFIDNP) forms a coiled coil. N619 carries an N-linked (GlcNAc...) asparagine; by host glycan. A helical membrane pass occupies residues 652–672 (WIPAGIGIIGVIIAIIALLCI). Residues C671 and C673 are each lipidated (S-palmitoyl cysteine; by host). Residues 673 to 677 (CKILC) are Cytoplasmic-facing.

The protein belongs to the filoviruses glycoprotein family. As to quaternary structure, homotrimer; each monomer consists of a GP1 and a GP2 subunit linked by disulfide bonds. The resulting peplomers (GP1,2) protrude from the virus surface as spikes. Interacts with host integrin alpha-V/ITGAV. Interacts with host CLEC10A. Binds also to host CD209 and CLEC4M/DC-SIGN(R). Interacts with host FOLR1. Interacts with BST2; this interaction inhibits the antiviral effect of BST2 and this allows viral release from infected cells. Interacts with host FCN1; this interaction enhances viral entry. Interacts with host TLR4; this interaction induces cell death in T-lymphocytes or proinflammatory cytokines and SOCS1 production in monocytes. In terms of assembly, interacts with host entry receptor NPC1. GP1 and GP2delta are part of GP1,2delta soluble complexes released by ectodomain shedding. Post-translationally, the signal peptide region modulates GP's high mannose glycosylation, thereby determining the efficiency of the interactions with DC-SIGN(R). In terms of processing, N-glycosylated. O-glycosylated in the mucin-like region. Post-translationally, palmitoylation of GP2 is not required for its function. In terms of processing, specific enzymatic cleavages in vivo yield mature proteins. The precursor is processed into GP1 and GP2 by host cell furin in the trans Golgi, and maybe by other host proteases, to yield the mature GP1 and GP2 proteins. The cleavage site corresponds to the furin optimal cleavage sequence [KR]-X-[KR]-R. This cleavage does not seem to be required for function. After the internalization of the virus into cell endosomes, GP1 C-terminus is removed by the endosomal proteases cathepsin B, cathepsin L, or both, leaving a 19-kDa N-terminal fragment which is further digested by cathepsin B. Proteolytic processing of GP1,2 by host ADAM17 can remove the transmembrane anchor of GP2 and leads to shedding of complexes consisting in GP1 and truncated GP2 (GP1,2delta).

The protein localises to the virion membrane. Its subcellular location is the host cell membrane. It localises to the secreted. Functionally, trimeric GP1,2 complexes form the virion surface spikes and mediate the viral entry processes, with GP1 acting as the receptor-binding subunit and GP2 as the membrane fusion subunit. At later times of infection, down-regulates the expression of various host cell surface molecules that are essential for immune surveillance and cell adhesion. Down-modulates several integrins including ITGA1, ITGA2, ITGA3, ITGA4, ITGA5, ITGA6, ITGAV and ITGB1. This decrease in cell adhesion molecules may lead to cell detachment, contributing to the disruption of blood vessel integrity and hemorrhages developed during infection (cytotoxicity). Interacts with host TLR4 and thereby stimulates the differentiation and activation of monocytes leading to bystander death of T-lymphocytes. Down-regulates as well the function of host natural killer cells. Counteracts the antiviral effect of host BST2/tetherin that restricts release of progeny virions from infected cells. However, cooperates with VP40 and host BST2 to activate canonical NF-kappa-B pathway in a manner dependent on neddylation. In terms of biological role, functions as a decoy for anti-GP1,2 antibodies thereby contributing to viral immune evasion. Interacts and activates host macrophages and dendritic cells inducing up-regulation of cytokine transcription. This effect is mediated throught activation of host TLR4. Responsible for binding to the receptor(s) on target cells. Interacts with CD209/DC-SIGN and CLEC4M/DC-SIGNR which act as cofactors for virus entry into dendritic cells (DCs) and endothelial cells. Binding to the macrophage specific lectin CLEC10A also seems to enhance virus infectivity. Interaction with FOLR1/folate receptor alpha may be a cofactor for virus entry in some cell types, although results are contradictory. Members of the Tyro3 receptor tyrosine kinase family also seem to be cell entry factors in filovirus infection. Once attached, the virions are internalized through clathrin-dependent endocytosis and/or macropinocytosis. After internalization of the virus into the endosomes of the host cell, proteolysis of GP1 by two cysteine proteases, CTSB/cathepsin B and CTSL/cathepsin L removes the glycan cap and allows GP1 binding to the host entry receptor NPC1. NPC1-binding, Ca(2+) and acidic pH induce a conformational change of GP2, which unmasks its fusion peptide and permit membranes fusion. Its function is as follows. Acts as a class I viral fusion protein. Under the current model, the protein has at least 3 conformational states: pre-fusion native state, pre-hairpin intermediate state, and post-fusion hairpin state. During viral and target cell membrane fusion, the coiled coil regions (heptad repeats) assume a trimer-of-hairpins structure, positioning the fusion peptide in close proximity to the C-terminal region of the ectodomain. The formation of this structure appears to drive apposition and subsequent fusion of viral and target cell membranes. Responsible for penetration of the virus into the cell cytoplasm by mediating the fusion of the membrane of the endocytosed virus particle with the endosomal membrane. Low pH in endosomes induces an irreversible conformational change in GP2, releasing the fusion hydrophobic peptide. This chain is Envelope glycoprotein (GP), found in Reston ebolavirus (strain Philippines-96) (REBOV).